A 609-amino-acid polypeptide reads, in one-letter code: Glutamine--fructose-6-phosphate aminotransferase [isomerizing] (609 aa).

Cys2 functions as the Nucleophile; for GATase activity in the catalytic mechanism. A Glutamine amidotransferase type-2 domain is found at 2 to 218; the sequence is CGIVGAVAQR…EGDVAEVTRR (217 aa). 2 consecutive SIS domains span residues 286 to 426 and 458 to 599; these read AAEF…HNGM and LAED…VDQP. The active-site For Fru-6P isomerization activity is Lys604.

In terms of assembly, homodimer.

It is found in the cytoplasm. The enzyme catalyses D-fructose 6-phosphate + L-glutamine = D-glucosamine 6-phosphate + L-glutamate. Functionally, catalyzes the first step in hexosamine metabolism, converting fructose-6P into glucosamine-6P using glutamine as a nitrogen source. In Shewanella oneidensis (strain ATCC 700550 / JCM 31522 / CIP 106686 / LMG 19005 / NCIMB 14063 / MR-1), this protein is Glutamine--fructose-6-phosphate aminotransferase [isomerizing].